Consider the following 110-residue polypeptide: Transcription factor S (110 aa).

The Zn(2+) site is built by cysteine 4, cysteine 7, cysteine 22, cysteine 25, cysteine 71, cysteine 74, cysteine 99, and cysteine 102. The C4-type zinc-finger motif lies at 4–25; it reads CPKCGNLMLPDRKRKVWVCRSC. Residues 67-107 form a TFIIS-type zinc finger; that stretch reads TKITCPKCGNDTAYWWEMQTRAGDEPSTIFYKCTKCGHTWR.

Belongs to the archaeal RpoM/eukaryotic RPA12/RPB9/RPC11 RNA polymerase family.

In terms of biological role, induces RNA cleavage activity in the RNA polymerase. In its presence, the cleavage activity of the RNA polymerase truncates the RNA back to position +15 in a stepwise manner by releasing mainly dinucleotides from the 3'-end of the nascent RNA. The truncated RNAs are able to continue elongation. Involved in transcriptional proofreading and fidelity. Misincorporation of nucleotides during elongation of transcription leads to arrested elongation complexes which are rescued by TFS-promoted removal of a dinucleotide from the 3'-end. TFS is able to induce a cleavage resynthesis cycle in stalled elongation complexes (resulting from the next missing nucleotide or a reduced incorporation rate of a wrong nucleotide) preventing misincorporation and enabling proofreading in a post-incorporation manner. Pausing of elongation complexes is the main determinant of TFS-induced RNA cleavage. The protein is Transcription factor S of Thermococcus celer.